A 143-amino-acid chain; its full sequence is Transcriptional regulator MraZ (143 aa).

2 SpoVT-AbrB domains span residues 5–47 (EYQH…PMHE) and 76–119 (ATEC…SKVI).

The protein belongs to the MraZ family. Forms oligomers.

It is found in the cytoplasm. The protein localises to the nucleoid. This chain is Transcriptional regulator MraZ, found in Bacillus subtilis (strain 168).